The following is a 114-amino-acid chain: Pro-FMRFamide-related neuropeptide FF (114 aa).

An N-terminal signal peptide occupies residues 1 to 21 (MDSKWAALLLLLLLLLNWGHT). A propeptide spanning residues 22–69 (EEAGSWGEDQVFAGEDKGPHPPQYAHIPDRIQTPGSLFRVLLQAMDTP) is cleaved from the precursor. Phenylalanine 82 bears the Phenylalanine amide mark. Positions 85 to 100 (SAWGSWSKEQLNPQAR) are excised as a propeptide. Phenylalanine 111 carries the phenylalanine amide modification.

It belongs to the FARP (FMRFamide related peptide) family.

The protein localises to the secreted. Functionally, morphine modulating peptides. Have wide-ranging physiologic effects, including the modulation of morphine-induced analgesia, elevation of arterial blood pressure, and increased somatostatin secretion from the pancreas. Neuropeptide FF potentiates and sensitizes ASIC1 and ASIC3 channels. The sequence is that of Pro-FMRFamide-related neuropeptide FF (Npff) from Mus musculus (Mouse).